Consider the following 176-residue polypeptide: Deoxyuridine 5'-triphosphate nucleotidohydrolase (176 aa).

Residues 67–69 (RSG), Asn80, 84–86 (TVD), and Lys94 contribute to the substrate site. The disordered stretch occupies residues 141–176 (GGFGSTGGHASVDGAEGGITHGGNSYASVVSDREGQ).

The protein belongs to the dUTPase family. It depends on Mg(2+) as a cofactor.

The enzyme catalyses dUTP + H2O = dUMP + diphosphate + H(+). It participates in pyrimidine metabolism; dUMP biosynthesis; dUMP from dCTP (dUTP route): step 2/2. Its function is as follows. This enzyme is involved in nucleotide metabolism: it produces dUMP, the immediate precursor of thymidine nucleotides and it decreases the intracellular concentration of dUTP so that uracil cannot be incorporated into DNA. In Streptomyces griseus subsp. griseus (strain JCM 4626 / CBS 651.72 / NBRC 13350 / KCC S-0626 / ISP 5235), this protein is Deoxyuridine 5'-triphosphate nucleotidohydrolase.